The sequence spans 875 residues: Metal transporter CNNM2 (875 aa).

At 1–250 (MIGCGACEPE…TKMIVGEEKK (250 aa)) the chain is on the extracellular side. An N-linked (GlcNAc...) asparagine glycan is attached at Asn-112. The interval 122–148 (EHERRRHTPGERGLGGPAPPEPDSGPQ) is disordered. Residues 251-271 (FLLPFWLQVIFISLLLCLSGM) form a helical membrane-spanning segment. Residues 251–431 (FLLPFWLQVI…DPYNDLVKEE (181 aa)) form the CNNM transmembrane domain. Over 272–313 (FSGLNLGLMALDPMELRIVQNCGTEKEKNYAKRIEPVRRQGN) the chain is Cytoplasmic. Residues 314–334 (YLLCSLLLGNVLVNTTLTILL) constitute an intramembrane region (helical). At 335 to 338 (DDIA) the chain is on the cytoplasmic side. Residues 339–359 (GSGLVAVVVSTIGIVIFGEIV) traverse the membrane as a helical segment. Residues 360-368 (PQAICSRHG) are Extracellular-facing. The chain crosses the membrane as a helical span at residues 369-389 (LAVGANTIFLTKFFMMMTFPA). At 390-875 (SYPVSKLLDC…NHSLHSEGAI (486 aa)) the chain is on the cytoplasmic side. CBS domains lie at 450 to 511 (MTPL…CTPL) and 518 to 584 (YNHP…ILDE). Residues 741–763 (AGSPGENKSPPRPCGLNHSDSLS) form a disordered region. Position 761 is a phosphoserine (Ser-761).

It belongs to the ACDP family.

It is found in the cell membrane. Its function is as follows. Divalent metal cation transporter. Mediates transport of divalent metal cations in an order of Mg(2+) &gt; Co(2+) &gt; Mn(2+) &gt; Sr(2+) &gt; Ba(2+) &gt; Cu(2+) &gt; Fe(2+). The polypeptide is Metal transporter CNNM2 (Cnnm2) (Rattus norvegicus (Rat)).